Reading from the N-terminus, the 268-residue chain is ClpXP adapter protein SpxH (268 aa).

The protein belongs to the SpxH family. In terms of assembly, interacts with Spx.

It is found in the cytoplasm. Functionally, adapter protein required for efficient degradation of Spx by ClpXP under non-stress conditions. Interaction with Spx stabilizes Spx and exposes the C-terminus of Spx for recognition and proteolysis by ClpXP. In Staphylococcus aureus (strain COL), this protein is ClpXP adapter protein SpxH.